A 181-amino-acid polypeptide reads, in one-letter code: TATA-box-binding protein C (181 aa).

Tandem repeats lie at residues 5 to 83 (IANI…LGML) and 99 to 177 (VENV…QSKV).

It belongs to the TBP family.

General factor that plays a role in the activation of archaeal genes transcribed by RNA polymerase. Binds specifically to the TATA box promoter element which lies close to the position of transcription initiation. The chain is TATA-box-binding protein C (tbpC1) from Halobacterium salinarum (strain ATCC 700922 / JCM 11081 / NRC-1) (Halobacterium halobium).